Consider the following 91-residue polypeptide: Large ribosomal subunit protein bL28 (91 aa).

The segment at 1-23 (MSRVCELTGKGPMSGNNVSHANN) is disordered.

This sequence belongs to the bacterial ribosomal protein bL28 family.

The protein is Large ribosomal subunit protein bL28 of Paracoccus denitrificans (strain Pd 1222).